Reading from the N-terminus, the 558-residue chain is Nuclear speckle splicing regulatory protein 1 (558 aa).

The tract at residues Pro-21 to Ala-54 is disordered. Residues Ser-27 and Ser-33 each carry the phosphoserine modification. Residues Ile-104 to Ala-170 adopt a coiled-coil conformation. Residues Asn-106 to Ala-170 form a necessary for alternative splicing activity region. Residues Lys-199 and Lys-210 each participate in a glycyl lysine isopeptide (Lys-Gly) (interchain with G-Cter in SUMO2) cross-link. Basic and acidic residues predominate over residues Glu-204–Arg-215. The tract at residues Glu-204–Ser-534 is disordered. Over residues Gly-216–Arg-226 the composition is skewed to polar residues. Residues Ser-248, Ser-254, and Ser-255 each carry the phosphoserine modification. A compositionally biased stretch (basic and acidic residues) spans Phe-250–Phe-280. Thr-275 carries the post-translational modification Phosphothreonine. Residue Lys-281 forms a Glycyl lysine isopeptide (Lys-Gly) (interchain with G-Cter in SUMO2) linkage. Basic residues predominate over residues Ser-299–Ser-310. 3 stretches are compositionally biased toward basic and acidic residues: residues Arg-311–Val-442, Arg-449–Glu-487, and Arg-501–Pro-517. A coiled-coil region spans residues Lys-379 to Arg-427. A Phosphoserine modification is found at Ser-457.

Belongs to the NSRP1 family. Interacts (via C-terminus) with SRSF1. Interacts (via C-terminus) with SRSF2. In terms of tissue distribution, expressed in dendritic cells, T-cells, B-cells and natural killer cells. Expressed in secondary lymphoid organs such as spleen and mesenteric, axillary and brachial lymph nodes.

It localises to the nucleus. Its subcellular location is the nucleus speckle. Functionally, RNA-binding protein that mediates pre-mRNA alternative splicing regulation. The chain is Nuclear speckle splicing regulatory protein 1 (NSRP1) from Homo sapiens (Human).